The chain runs to 447 residues: 2-oxoadipate dioxygenase/decarboxylase (447 aa).

Residues H68, R72, and H224 each coordinate 2-oxoadipate. H68 is a binding site for Fe(2+). 2 residues coordinate Fe(2+): H224 and E290. V391 lines the 2-oxoadipate pocket.

It belongs to the 2-oxoadipate dioxygenase/decarboxylase family. It depends on Fe(2+) as a cofactor.

The enzyme catalyses 2-oxoadipate + O2 = (R)-2-hydroxyglutarate + CO2. Its function is as follows. Catalyzes the decarboxylation and hydroxylation of 2-oxoadipate (2OA) to form D-2-hydroxyglutarate (D-2-HGA). This is 2-oxoadipate dioxygenase/decarboxylase (ydcJ) from Escherichia coli (strain K12).